A 727-amino-acid polypeptide reads, in one-letter code: ADP-ribosylation factor-binding protein GGA3 (727 aa).

A VHS domain is found at 16-146 (ATNPSNRQED…MLKRQGIVQS (131 aa)). Phosphoserine occurs at positions 159 and 275. The GAT domain occupies 171–298 (DEEKSKLLAK…VINSYKTIIE (128 aa)). A unstructured hinge region spans residues 299 to 597 (GQIINGEVTT…VHVPLESIKP (299 aa)). A disordered region spans residues 334–385 (TPSSSSPVLAPAPAPPTSGIPILPPPPQTSGPPRSRSSSQAEAPSGPDSTNN). The span at 343 to 363 (APAPAPPTSGIPILPPPPQTS) shows a compositional bias: pro residues. The segment covering 364–374 (GPPRSRSSSQA) has biased composition (low complexity). Residues 391–395 (DEELL) carry the DXXLL motif. Positions 400–419 (SDPAPTAPKESAGNSPWHLF) are disordered. The GAE domain maps to 598-719 (SSALPVTAYD…TELGEVDQFP (122 aa)).

Belongs to the GGA protein family. Monomer. Interacts with GGA1 and GGA2. Binds to clathrin and activated ARFs, such as ARF1, ARF5 and ARF6. Binds RABEP1 and RABGEF1. Interacts with the membrane proteins M6PR/CD-MPR and IGF2R/CI-MPR and the accessory proteins SYNRG, EPN4, NECAP1, NECAP2 and AFTPH/aftiphilin. Interacts with TSG101 and UBC. Interacts with ADRA2B. Interacts with NTRK1; the interaction is independent of NTRK1 activation and ubiquitination. Interacts (via VHS domain) with BACE1 (via DXXLL motif). In terms of processing, phosphorylated by CK2 and dephosphorylated by PP2A. Phosphorylation of GGA3 allows the internal DXXLL motif to bind the VHS domain and to inhibit the recognition of cargo signals. Post-translationally, ubiquitinated. Proteolytically cleaved during apoptosis by CASP3.

It is found in the golgi apparatus. The protein resides in the trans-Golgi network membrane. Its subcellular location is the endosome membrane. It localises to the early endosome membrane. The protein localises to the recycling endosome membrane. Plays a role in protein sorting and trafficking between the trans-Golgi network (TGN) and endosomes. Mediates the ARF-dependent recruitment of clathrin to the TGN and binds ubiquitinated proteins and membrane cargo molecules with a cytosolic acidic cluster-dileucine (DXXLL) motif. Mediates export of the GPCR receptor ADRA2B to the cell surface. Involved in BACE1 transport and sorting as well as regulation of BACE1 protein levels. Regulates retrograde transport of BACE1 from endosomes to the trans-Golgi network via interaction through the VHS motif and dependent of BACE1 phosphorylation. Modulates BACE1 protein levels independently of the interaction between VHS domain and DXXLL motif through recognition of ubiquitination. Key player in a novel DXXLL-mediated endosomal sorting machinery to the recycling pathway that targets NTRK1 to the plasma membrane. The chain is ADP-ribosylation factor-binding protein GGA3 from Rattus norvegicus (Rat).